Reading from the N-terminus, the 251-residue chain is Triosephosphate isomerase (251 aa).

Residue N9–K11 participates in substrate binding. H96 acts as the Electrophile in catalysis. E166 functions as the Proton acceptor in the catalytic mechanism. Substrate contacts are provided by residues G172, S212, and G233–G234.

The protein belongs to the triosephosphate isomerase family. In terms of assembly, homodimer.

The protein resides in the cytoplasm. The catalysed reaction is D-glyceraldehyde 3-phosphate = dihydroxyacetone phosphate. It participates in carbohydrate biosynthesis; gluconeogenesis. Its pathway is carbohydrate degradation; glycolysis; D-glyceraldehyde 3-phosphate from glycerone phosphate: step 1/1. In terms of biological role, involved in the gluconeogenesis. Catalyzes stereospecifically the conversion of dihydroxyacetone phosphate (DHAP) to D-glyceraldehyde-3-phosphate (G3P). In Pelodictyon phaeoclathratiforme (strain DSM 5477 / BU-1), this protein is Triosephosphate isomerase.